Reading from the N-terminus, the 174-residue chain is N5-carboxyaminoimidazole ribonucleotide mutase (174 aa).

Residues Ser16, Asp19, and Arg46 each coordinate substrate.

Belongs to the AIR carboxylase family. Class I subfamily.

The enzyme catalyses 5-carboxyamino-1-(5-phospho-D-ribosyl)imidazole + H(+) = 5-amino-1-(5-phospho-D-ribosyl)imidazole-4-carboxylate. It participates in purine metabolism; IMP biosynthesis via de novo pathway; 5-amino-1-(5-phospho-D-ribosyl)imidazole-4-carboxylate from 5-amino-1-(5-phospho-D-ribosyl)imidazole (N5-CAIR route): step 2/2. In terms of biological role, catalyzes the conversion of N5-carboxyaminoimidazole ribonucleotide (N5-CAIR) to 4-carboxy-5-aminoimidazole ribonucleotide (CAIR). This Mycobacterium tuberculosis (strain CDC 1551 / Oshkosh) protein is N5-carboxyaminoimidazole ribonucleotide mutase.